A 446-amino-acid polypeptide reads, in one-letter code: Chromogranin-A (446 aa).

The N-terminal stretch at 1-16 (SAAALALLLCAGQVIA) is a signal peptide. The cysteines at positions 33 and 54 are disulfide-linked. The tract at residues 85–426 (AKERSHQQKK…RPEDQELESL (342 aa)) is disordered. At Ser97 the chain carries Phosphoserine. Residues 105 to 138 (VLEKQNDQAELKEGTEEASSKEAAEKRGDSKEVE) show a composition bias toward basic and acidic residues. Over residues 160–171 (EAEDQTPGEEEA) the composition is skewed to acidic residues. Ser209 carries the phosphoserine modification. Residues 226 to 243 (AGEKAVPEEEGPRSEAFD) show a composition bias toward basic and acidic residues. At Ser286 the chain carries Phosphoserine. At Gly304 the chain carries Glycine amide. Residue Ser319 is modified to Phosphoserine. The segment covering 319–346 (SEEWENAKRWSKMDRLAKELTAEKRLQG) has biased composition (basic and acidic residues). The segment covering 347–357 (EEEEEEEEEDP) has biased composition (acidic residues). Ser360 bears the Phosphoserine mark. Methionine sulfoxide is present on Met361. Phosphoserine is present on residues Ser387, Ser391, Ser413, and Ser427. Over residues 403–420 (YLEEKKEEEGSANRRPED) the composition is skewed to basic and acidic residues. Ser413 is a glycosylation site (O-linked (Xyl...) (chondroitin sulfate) serine).

Belongs to the chromogranin/secretogranin protein family. Self-interacts; self-assembly is promoted in vitro by chondroitin sulfate attachment which occurs at mildly acidic pH conditions. Interacts with SCG3. Interacts with ITPR1 in the secretory granules. Post-translationally, O-glycosylated; contains chondroitin sulfate (CS). CS attachment is pH-dependent, being observed at mildly acidic conditions of pH 5 but not at neutral pH, and promotes self-assembly in vitro. Parathyroid CHGA is sulfated on tyrosine residues, whereas adrenal CHGA seems to be mainly sulfated on oligosaccharide residues.

Its subcellular location is the secreted. It is found in the cytoplasmic vesicle. The protein resides in the secretory vesicle. It localises to the neuronal dense core vesicle. Functionally, strongly inhibits glucose induced insulin release from the pancreas. Its function is as follows. Inhibits low calcium-stimulated parathyroid cell secretion. Inhibits catecholamine release from chromaffin cells and noradrenergic neurons by acting as a non-competitive nicotinic cholinergic antagonist. Can induce mast cell migration, degranulation and production of cytokines and chemokines. In terms of biological role, regulates granule biogenesis in endocrine cells by up-regulating the transcription of protease nexin 1 (SERPINE2) via a cAMP-PKA-SP1 pathway. This leads to inhibition of granule protein degradation in the Golgi complex which in turn promotes granule formation. This is Chromogranin-A (CHGA) from Sus scrofa (Pig).